The primary structure comprises 101 residues: Aspartyl/glutamyl-tRNA(Asn/Gln) amidotransferase subunit C (101 aa).

The protein belongs to the GatC family. In terms of assembly, heterotrimer of A, B and C subunits.

It carries out the reaction L-glutamyl-tRNA(Gln) + L-glutamine + ATP + H2O = L-glutaminyl-tRNA(Gln) + L-glutamate + ADP + phosphate + H(+). The enzyme catalyses L-aspartyl-tRNA(Asn) + L-glutamine + ATP + H2O = L-asparaginyl-tRNA(Asn) + L-glutamate + ADP + phosphate + 2 H(+). Its function is as follows. Allows the formation of correctly charged Asn-tRNA(Asn) or Gln-tRNA(Gln) through the transamidation of misacylated Asp-tRNA(Asn) or Glu-tRNA(Gln) in organisms which lack either or both of asparaginyl-tRNA or glutaminyl-tRNA synthetases. The reaction takes place in the presence of glutamine and ATP through an activated phospho-Asp-tRNA(Asn) or phospho-Glu-tRNA(Gln). This chain is Aspartyl/glutamyl-tRNA(Asn/Gln) amidotransferase subunit C, found in Salinispora tropica (strain ATCC BAA-916 / DSM 44818 / JCM 13857 / NBRC 105044 / CNB-440).